The sequence spans 195 residues: ATP-dependent Clp protease proteolytic subunit (195 aa).

Catalysis depends on Ser-98, which acts as the Nucleophile. The active site involves His-123.

This sequence belongs to the peptidase S14 family. Fourteen ClpP subunits assemble into 2 heptameric rings which stack back to back to give a disk-like structure with a central cavity, resembling the structure of eukaryotic proteasomes.

It is found in the cytoplasm. The catalysed reaction is Hydrolysis of proteins to small peptides in the presence of ATP and magnesium. alpha-casein is the usual test substrate. In the absence of ATP, only oligopeptides shorter than five residues are hydrolyzed (such as succinyl-Leu-Tyr-|-NHMec, and Leu-Tyr-Leu-|-Tyr-Trp, in which cleavage of the -Tyr-|-Leu- and -Tyr-|-Trp bonds also occurs).. Cleaves peptides in various proteins in a process that requires ATP hydrolysis. Has a chymotrypsin-like activity. Plays a major role in the degradation of misfolded proteins. The chain is ATP-dependent Clp protease proteolytic subunit from Sulfurovum sp. (strain NBC37-1).